A 55-amino-acid polypeptide reads, in one-letter code: Large ribosomal subunit protein bL33 (55 aa).

This sequence belongs to the bacterial ribosomal protein bL33 family.

This Methylobacterium radiotolerans (strain ATCC 27329 / DSM 1819 / JCM 2831 / NBRC 15690 / NCIMB 10815 / 0-1) protein is Large ribosomal subunit protein bL33.